We begin with the raw amino-acid sequence, 382 residues long: Mannitol-1-phosphate 5-dehydrogenase (382 aa).

3–14 (ALHFGAGNIGRG) contacts NAD(+).

Belongs to the mannitol dehydrogenase family.

The enzyme catalyses D-mannitol 1-phosphate + NAD(+) = beta-D-fructose 6-phosphate + NADH + H(+). The polypeptide is Mannitol-1-phosphate 5-dehydrogenase (Salmonella schwarzengrund (strain CVM19633)).